Here is a 1335-residue protein sequence, read N- to C-terminus: MAKKFNYKLPSMVALTLFGTAFTAHQANAAEQPQNQSNHKNVLDDQTALKQAEKAKSEVTQSTTNVSGTQTYQDPTQVQPKQDTQSTTYDASLDEMSTYNEISSNQKQQSLSTDDANQNQTNSVTKNQQEETNDLTQEDKTSTDTNQLQETQSVAKENEKDLGANANNEQQDKKMTASQPSENQAIETQTASNDNESQQKSQQVTSEQNETATPKVSNTNASGYNFDYDDEDDDSSTDHLEPISLNNVNATSKQTTSYKYKEPAQRVTTNTVKKETASNQATIDTKQFTPFSATAQPRTVYSVSSQKTSSLPKYTPKVNSSINNYIRKKNMKAPRIEEDYTSYFPKYGYRNGVGRPEGIVVHDTANDNSTIDGEIAFMKRNYTNAFVHAFVDGNRIIETAPTDYLSWGAGPYGNQRFINVEIVHTHDYDSFARSMNNYADYAATQLQYYNLKPDSAENDGRGTVWTHAAISNFLGGTDHADPHQYLRSHNYSYAELYDLIYEKYLIKTKQVAPWGTTSTKPSQPSKPSGGTNNKLTVSANRGVAQIKPTNNGLYTTVYDSKGHKTDQVQKTLSVTKTATLGNNKFYLVEDYNSGKKYGWVKQGDVVYNTAKAPVKVNQTYNVKAGSTLYTVPWGTPKQVASKVSGTGNQTFKATKQQQIDKATYLYGTVNGKSGWISKYYLTTASKPSNPTKPSTNNQLTVTNNSGVAQINAKNSGLYTTVYDTKGKTTNQIQRTLSVTKAATLGDKKFYLVGDYNTGTNYGWVKQDEVIYNTAKSPVKINQTYNVKPGVKLHTVPWGTYNQVAGTVSGKGDQTFKATKQQQIDKATYLYGTVNGKSGWISKYYLTAPSKVQALSTQSTPAPKQVKPSTQTVNQIAQVKANNSGIRASVYDKTAKSGTKYANRTFLINKQRTQGNNTYVLLQDGTSNTPLGWVNINDVTTQNIGKQTQSIGKYSVKPTNNGLYSIAWGTKNQQLLAPNTLANQAFNASKAVYVGKDLYLYGTVNNRTGWIAAKDLIQNSTDAQSTPYNYTFVINNSKSYFYMDPTKANRYSLKPYYEQTFTVIKQKNINGVKWYYGQLLDGKYVWIKSTDLVKEKIKYAYTGMTLNNAINIQSRLKYKPQVQNEPLKWSNANYSQIKNAMDTKRLANDSSLKYQFLRLDQPQYLSAQALNKLLKGKGVLENQGAAFSQAARKYGLNEIYLISHALVETGNGTSQLAKGGDVSKGKFTTKTGHKYHNVFGIGAFDNNALVDGIKYAKNAGWTSVSKAIIGGAKFIGNSYVKAGQNTLYKMRWNPANPGTHQYATDINWANVNAQVLKQFYDKIGEVGKYFEIPTYK.

The N-terminal stretch at 1–29 is a signal peptide; it reads MAKKFNYKLPSMVALTLFGTAFTAHQANA. Disordered regions lie at residues 51–88, 100–262, and 514–535; these read QAEK…QSTT, NEIS…KYKE, and WGTT…NNKL. Polar residues-rich tracts occupy residues 58-88, 100-127, 143-155, 176-223, and 244-258; these read EVTQ…QSTT, NEIS…VTKN, TDTN…QSVA, TASQ…NASG, and SLNN…TTSY. The interval 303–863 is N-acetylmuramoyl-L-alanine amidase; it reads VSSQKTSSLP…LSTQSTPAPK (561 aa). Residues 515 to 531 are compositionally biased toward low complexity; it reads GTTSTKPSQPSKPSGGT. GW domains are found at residues 533-610, 612-686, 700-774, 776-850, 868-943, 945-1020, and 1023-1096; these read NKLT…YNTA, APVK…TASK, TVTN…YNTA, SPVK…APSK, STQT…TQNI, KQTQ…QNST, and QSTP…KEKI. The endo-beta-N-acetylglucosaminidase stretch occupies residues 864-1335; that stretch reads QVKPSTQTVN…GKYFEIPTYK (472 aa).

It in the N-terminal section; belongs to the N-acetylmuramoyl-L-alanine amidase 2 family. In the C-terminal section; belongs to the glycosyl hydrolase 73 family. Oligomer; forms a ring structure at the cell surface which is important for efficient partitioning of daughter cells after cell division. Post-translationally, undergoes proteolytic processing to generate the two extracellular lytic enzymes, probably at the septal region on the cell surface.

Its subcellular location is the secreted. The catalysed reaction is Hydrolyzes the link between N-acetylmuramoyl residues and L-amino acid residues in certain cell-wall glycopeptides.. The enzyme catalyses an N(4)-(oligosaccharide-(1-&gt;3)-[oligosaccharide-(1-&gt;6)]-beta-D-Man-(1-&gt;4)-beta-D-GlcNAc-(1-&gt;4)-alpha-D-GlcNAc)-L-asparaginyl-[protein] + H2O = an oligosaccharide-(1-&gt;3)-[oligosaccharide-(1-&gt;6)]-beta-D-Man-(1-&gt;4)-D-GlcNAc + N(4)-(N-acetyl-beta-D-glucosaminyl)-L-asparaginyl-[protein]. Endohydrolysis of the di-N-acetylchitobiosyl unit in high-mannose glycopeptides and glycoproteins containing the -[(Man)5(GlcNAc)2]-Asn structure. One N-acetyl-D-glucosamine residue remains attached to the protein; the rest of the oligosaccharide is released intact. Cleaves the peptidoglycan connecting the daughter cells at the end of the cell division cycle, resulting in the separation of the two newly divided cells. Acts as an autolysin in penicillin-induced lysis. As a bacterial surface-associated protein, mediates attachment to polystyrene surfaces, contributing to biofilm formation. Also has vitronectin-binding activity. This is Bifunctional autolysin (atl) from Staphylococcus epidermidis.